A 262-amino-acid chain; its full sequence is Octopine permease ATP-binding protein P (262 aa).

One can recognise an ABC transporter domain in the interval 9–254 (VKLTGIRKNF…PRTERFRQFL (246 aa)). Residue 41-48 (GSSGSGKS) coordinates ATP.

The protein belongs to the ABC transporter superfamily.

The protein localises to the cell inner membrane. Its function is as follows. Component of the octopine active transport system probably consisting of four subunits: Q, M, P and T. In Rhizobium meliloti (Ensifer meliloti), this protein is Octopine permease ATP-binding protein P (occP).